Here is a 318-residue protein sequence, read N- to C-terminus: Nisin-resistance protein (318 aa).

The helical transmembrane segment at 7–28 (ILLGLVAVCALFLGIIYLWGYK) threads the bilayer.

It is found in the cell membrane. The polypeptide is Nisin-resistance protein (nsr) (Lactococcus lactis subsp. lactis (Streptococcus lactis)).